The primary structure comprises 617 residues: Probable potassium transport system protein Kup 3 (617 aa).

Helical transmembrane passes span 42-62, 95-115, 129-149, 160-180, 206-226, 240-260, 282-302, 330-350, 360-380, 386-406, and 411-431; these read VASL…ALLI, LVVG…TPAI, PSLA…LFMM, IFGP…IHGI, VSFA…AMYA, WFAI…ALLI, LVAF…SGVF, IYVP…VLSF, YGIA…LVAI, PWLV…FFSA, and LFEG…MMLT.

It belongs to the HAK/KUP transporter (TC 2.A.72) family.

Its subcellular location is the cell inner membrane. The enzyme catalyses K(+)(in) + H(+)(in) = K(+)(out) + H(+)(out). Transport of potassium into the cell. Likely operates as a K(+):H(+) symporter. This Bradyrhizobium diazoefficiens (strain JCM 10833 / BCRC 13528 / IAM 13628 / NBRC 14792 / USDA 110) protein is Probable potassium transport system protein Kup 3.